Reading from the N-terminus, the 162-residue chain is Regulator of sigma D (162 aa).

The protein belongs to the Rsd/AlgQ family. Interacts with RpoD.

Its subcellular location is the cytoplasm. Binds RpoD and negatively regulates RpoD-mediated transcription activation by preventing the interaction between the primary sigma factor RpoD with the catalytic core of the RNA polymerase and with promoter DNA. May be involved in replacement of the RNA polymerase sigma subunit from RpoD to RpoS during the transition from exponential growth to the stationary phase. The polypeptide is Regulator of sigma D (Salmonella typhi).